The chain runs to 293 residues: Proline iminopeptidase (293 aa).

One can recognise an AB hydrolase-1 domain in the interval 28–277; the sequence is PLVLLHGGPG…NCGHMSFVEK (250 aa). The active-site Nucleophile is the serine 105. Residue aspartate 244 is part of the active site. Histidine 271 acts as the Proton donor in catalysis.

It belongs to the peptidase S33 family.

The protein localises to the cell envelope. The catalysed reaction is Release of N-terminal proline from a peptide.. Releases the N-terminal proline from various substrates. The protein is Proline iminopeptidase of Lactobacillus crispatus (strain ST1).